Reading from the N-terminus, the 766-residue chain is LPS-assembly protein LptD (766 aa).

The signal sequence occupies residues 1 to 18 (MNIRYLLLLSLMPHLVWA).

It belongs to the LptD family. In terms of assembly, component of the lipopolysaccharide transport and assembly complex. Interacts with LptE and LptA.

The protein resides in the cell outer membrane. Functionally, together with LptE, is involved in the assembly of lipopolysaccharide (LPS) at the surface of the outer membrane. The polypeptide is LPS-assembly protein LptD (Shewanella denitrificans (strain OS217 / ATCC BAA-1090 / DSM 15013)).